The following is a 121-amino-acid chain: Large ribosomal subunit protein bL20 (121 aa).

It belongs to the bacterial ribosomal protein bL20 family.

Its function is as follows. Binds directly to 23S ribosomal RNA and is necessary for the in vitro assembly process of the 50S ribosomal subunit. It is not involved in the protein synthesizing functions of that subunit. In Methylorubrum extorquens (strain PA1) (Methylobacterium extorquens), this protein is Large ribosomal subunit protein bL20.